Here is a 459-residue protein sequence, read N- to C-terminus: Cysteine--tRNA ligase (459 aa).

Position 29 (cysteine 29) interacts with Zn(2+). A 'HIGH' region motif is present at residues 31–41 (VTTYDYCHIGH). 3 residues coordinate Zn(2+): cysteine 210, histidine 235, and glutamate 239. Residues 267–271 (KMSKS) carry the 'KMSKS' region motif. Position 270 (lysine 270) interacts with ATP.

It belongs to the class-I aminoacyl-tRNA synthetase family. As to quaternary structure, monomer. Requires Zn(2+) as cofactor.

Its subcellular location is the cytoplasm. It carries out the reaction tRNA(Cys) + L-cysteine + ATP = L-cysteinyl-tRNA(Cys) + AMP + diphosphate. The chain is Cysteine--tRNA ligase from Idiomarina loihiensis (strain ATCC BAA-735 / DSM 15497 / L2-TR).